Consider the following 375-residue polypeptide: GDP-mannose transporter GONST2 (375 aa).

9 helical membrane passes run 79–99 (LVSG…NKIV), 112–132 (MLYQ…SGVV), 141–161 (LIRV…SGMY), 165–185 (YINV…TGIG), 199–219 (WAAM…DLTF), 262–282 (MVLL…ILLG), 300–320 (VVAT…MWFL), 327–347 (TYSL…LVLF), and 349–369 (VPLS…GVVF).

This sequence belongs to the nucleotide-sugar transporter family. GDP-Mannose:GMP antiporter (GMA) (TC 2.A.7.13) subfamily. As to expression, expressed in rosette leaves, stems, flowers and siliques.

It is found in the golgi apparatus membrane. In terms of biological role, GDP-mannose transporter that may be involved in the import of GDP-mannose from the cytoplasm into the Golgi lumen. This Arabidopsis thaliana (Mouse-ear cress) protein is GDP-mannose transporter GONST2.